We begin with the raw amino-acid sequence, 58 residues long: Ikitoxin (58 aa).

The region spanning 3–58 (VPGNYPLDKDGNTYKCFLLGENEECLNVCKLHGVQYGYCYASKCWCEYLEDDKDSV) is the LCN-type CS-alpha/beta domain. Disulfide bonds link Cys18/Cys41, Cys27/Cys46, and Cys31/Cys48.

As to expression, expressed by the venom gland.

The protein resides in the secreted. Its function is as follows. Beta toxins bind voltage-independently at site-4 of sodium channels (Nav) and shift the voltage of activation toward more negative potentials thereby affecting sodium channel activation and promoting spontaneous and repetitive firing. Does not produce effect when administered to blowfly and cabbage looper larvae. In mice, does not produce convulsions, tremors, increased ventilation nor death. The chain is Ikitoxin from Parabuthus transvaalicus (Transvaal thick-tailed scorpion).